We begin with the raw amino-acid sequence, 1456 residues long: MISLSLVLLLLFGVRCFDSAGQINDDSPLFISTSIDNSMNLKILVEKKPYFTGSVTGYKLYYTNDSSQTNEEYEKWMHQEALSNQNSYNFVIDANKHEIVSGDVYRVRATVFFNNVESVPTGVISINTRQSIPKAPLIVNTKILYNSSVLISFVPADDVNAIENYTLMYKQMEAEEWKSLNFKSDFDGKVLLDGLIPNHTYEIKIFVTGGIVQGTPSNLATFTTNSTALALVKTEPDEEYTADPQTNEPLSITCTVKSVSKASVLWKVNGIKVSVDSSFYTVVTSVHEDFIESTIRAKSRTRSAKFTCLATNDAGDSSKEVNVIIKGPGSPPSEITLVAEKRGYTISWKPPSHPNGKITKYVVYHTLNREDPLSDWRKIDLDGSEKMVRIIMDTEESFYGRVQAATELGPGIISDIVAMERDTQPISVESDLFGVSATTMVVNPRETLSIQCTARGKPRPSISVAISDRKNASQVEVDVWSRLQATSSAGIVSAVHNFSVLTSKFVHCRAKNSAGSNYSTMELKVDKPGDAPTQIQVLSVNALDALVVWHSPQFPNSPITSYIVLVSNDDKEDKSTWLQYESNAKETQINRMLLPTGNLEKSTEYFVCVRAKNAAGIGPTSSLISFITLNGGPDSPPDNLKVLINEANQVIVYWNTPNSTTEVTGYLIYYTRDLSLSNDDYKNWQFVEMNNNSTRYKFDLSVGLKPKTFYRVRISGKNSHADGPASEVVEFETAYSEVPIPTDLKTEVLDDNTIHIKFNAVRDPDDHSKALGEYRIDLAATDDVLHALWKQIEPKSIKIDEISSMVDVEIDGDSVEKNQMYWVKVTARLDNPSWGMHSSKPRWFRTGHGKLMTSVTLEGAPLIEKEPNLFEELSVTCTGMGSPAPIITWEWMNKSIENGTEGWNILNIQIDDTTVVSKITRNNIRESGDLTCLANNNEGSSSASVEIRVLGPGNPPENIILTAYRNQINVTWQESTLPNGDIMKYIVYYSENENDDLSDWNKFETAELETYVETFGPHTKHFIRVQAVSDRGPGIISNVLSCISDVLYETIHLEIVASNILDFEAEPNQNVEIRCKGTGKPQPELFYQFANETEQNFVEVETNDMDLFEAKAPEINSRRNVTVTCRASNKYENVTISKVIIIKRPGEAPTNISWSFEEEYDSTLYINWNPIENANGEKLEYNLYLSNYKTKVSGPPVKIPDIPLDVNISLRVSAENEYGEGEKTFPIWIPTPNGGPKTAPILSSLHAQDSKVYIFWVEPRLPNGEIQNYTIYIQKENESENEEHSIDKEWKKFIYGSNITHVIIGVDDGLEENERYQMKMTATNQRHEGPETKVYTFDLISFDENDVIDNFTAIVINSTVFVEVGNPIYTKYNIYIREDGNNQTVKHEIDVESGKTTFEFPFQLDHTLSYTIKMSGMKLGRESPPSEEIDLEFISSPSPTPIISGSRRKVIKEPPL.

Residues 1–16 (MISLSLVLLLLFGVRC) form the signal peptide. Fibronectin type-III domains follow at residues 24–128 (NDDS…SINT) and 132–227 (IPKA…TNST). Residues Asn-64, Asn-146, Asn-164, Asn-198, and Asn-225 are each glycosylated (N-linked (GlcNAc...) asparagine). In terms of domain architecture, Ig-like 1 spans 236–322 (PDEEYTADPQ…DAGDSSKEVN (87 aa)). An intrachain disulfide couples Cys-254 to Cys-308. One can recognise a Fibronectin type-III 3 domain in the interval 328–426 (PGSPPSEITL…VAMERDTQPI (99 aa)). 3 N-linked (GlcNAc...) asparagine glycosylation sites follow: Asn-471, Asn-497, and Asn-517. Fibronectin type-III domains lie at 531–631 (APTQ…TLNG), 636–736 (PPDN…TAYS), and 737–846 (EVPI…WFRT). 3 N-linked (GlcNAc...) asparagine glycosylation sites follow: Asn-658, Asn-691, and Asn-692. Positions 841–948 (PRWFRTGHGK…GSSSASVEIR (108 aa)) constitute an Ig-like 2 domain. A disulfide bridge connects residues Cys-877 and Cys-932. Asn-893, Asn-898, Asn-969, Asn-1091, Asn-1120, Asn-1133, Asn-1151, Asn-1207, Asn-1268, Asn-1277, Asn-1298, Asn-1350, Asn-1357, and Asn-1382 each carry an N-linked (GlcNAc...) asparagine glycan. The 96-residue stretch at 955 to 1050 (PPENIILTAY…SCISDVLYET (96 aa)) folds into the Fibronectin type-III 7 domain. Fibronectin type-III domains lie at 1148-1234 (APTN…TPNG), 1236-1343 (PKTA…ISFD), and 1347-1438 (VIDN…SSPS). Positions 1419 to 1456 (LGRESPPSEEIDLEFISSPSPTPIISGSRRKVIKEPPL) are disordered. The span at 1434 to 1445 (ISSPSPTPIISG) shows a compositional bias: low complexity.

The protein resides in the secreted. The polypeptide is Ig-like and fibronectin type-III domain-containing protein C27B7.7 (Caenorhabditis elegans).